A 364-amino-acid chain; its full sequence is Histidinol-phosphate aminotransferase (364 aa).

An N6-(pyridoxal phosphate)lysine modification is found at K224.

Belongs to the class-II pyridoxal-phosphate-dependent aminotransferase family. Histidinol-phosphate aminotransferase subfamily. In terms of assembly, homodimer. Pyridoxal 5'-phosphate is required as a cofactor.

It carries out the reaction L-histidinol phosphate + 2-oxoglutarate = 3-(imidazol-4-yl)-2-oxopropyl phosphate + L-glutamate. It functions in the pathway amino-acid biosynthesis; L-histidine biosynthesis; L-histidine from 5-phospho-alpha-D-ribose 1-diphosphate: step 7/9. The polypeptide is Histidinol-phosphate aminotransferase (Anaeromyxobacter sp. (strain Fw109-5)).